The chain runs to 93 residues: Large ribosomal subunit protein bL27 (93 aa).

A propeptide spanning residues 1 to 10 (MRFLLGLQYF) is cleaved from the precursor. The segment at 14–36 (KGVGSTKNGRDSESKRLGAKKSD) is disordered. Residues 21 to 36 (NGRDSESKRLGAKKSD) are compositionally biased toward basic and acidic residues.

Belongs to the bacterial ribosomal protein bL27 family. In terms of processing, the N-terminus is cleaved by ribosomal processing cysteine protease Prp.

This chain is Large ribosomal subunit protein bL27, found in Mycoplasma capricolum subsp. capricolum (strain California kid / ATCC 27343 / NCTC 10154).